The following is a 337-amino-acid chain: Glyceraldehyde-3-phosphate dehydrogenase (337 aa).

Residues Arg13 to Ile14, Asp35, and Arg80 contribute to the NAD(+) site. Residues Ser151–Thr153, Thr182, Thr211–Gly212, and Arg234 contribute to the D-glyceraldehyde 3-phosphate site. The active-site Nucleophile is Cys152. Residue Asn316 participates in NAD(+) binding.

The protein belongs to the glyceraldehyde-3-phosphate dehydrogenase family. As to quaternary structure, homotetramer.

It is found in the cytoplasm. The enzyme catalyses D-glyceraldehyde 3-phosphate + phosphate + NAD(+) = (2R)-3-phospho-glyceroyl phosphate + NADH + H(+). It functions in the pathway carbohydrate degradation; glycolysis; pyruvate from D-glyceraldehyde 3-phosphate: step 1/5. The polypeptide is Glyceraldehyde-3-phosphate dehydrogenase (GPD1) (Monascus purpureus (Red mold)).